The primary structure comprises 310 residues: tRNA-cytidine(32) 2-sulfurtransferase (310 aa).

The PP-loop motif motif lies at 45 to 50 (SGGKDS). Residues C120, C123, and C211 each contribute to the [4Fe-4S] cluster site.

This sequence belongs to the TtcA family. As to quaternary structure, homodimer. Mg(2+) is required as a cofactor. Requires [4Fe-4S] cluster as cofactor.

It localises to the cytoplasm. The enzyme catalyses cytidine(32) in tRNA + S-sulfanyl-L-cysteinyl-[cysteine desulfurase] + AH2 + ATP = 2-thiocytidine(32) in tRNA + L-cysteinyl-[cysteine desulfurase] + A + AMP + diphosphate + H(+). The protein operates within tRNA modification. Functionally, catalyzes the ATP-dependent 2-thiolation of cytidine in position 32 of tRNA, to form 2-thiocytidine (s(2)C32). The sulfur atoms are provided by the cysteine/cysteine desulfurase (IscS) system. In Shewanella baltica (strain OS195), this protein is tRNA-cytidine(32) 2-sulfurtransferase.